Consider the following 429-residue polypeptide: Ribosomal RNA small subunit methyltransferase B (429 aa).

S-adenosyl-L-methionine is bound by residues 254 to 260, Asp277, Asp303, and Asp322; that span reads CAAPGGK. Cys375 acts as the Nucleophile in catalysis.

The protein belongs to the class I-like SAM-binding methyltransferase superfamily. RsmB/NOP family.

The protein resides in the cytoplasm. It carries out the reaction cytidine(967) in 16S rRNA + S-adenosyl-L-methionine = 5-methylcytidine(967) in 16S rRNA + S-adenosyl-L-homocysteine + H(+). Specifically methylates the cytosine at position 967 (m5C967) of 16S rRNA. The polypeptide is Ribosomal RNA small subunit methyltransferase B (Shigella sonnei (strain Ss046)).